The following is a 304-amino-acid chain: Deoxyribonuclease-1-like 1 (304 aa).

Positions 1–24 (MPYMAMHGLTVALLLIFLAGGTEA) are cleaved as a signal peptide. An N-linked (GlcNAc...) asparagine glycan is attached at Asn-92. Glu-103 is an active-site residue. A glycan (N-linked (GlcNAc...) asparagine) is linked at Asn-123. The active site involves His-154. Residues Cys-193 and Cys-230 are joined by a disulfide bond. The N-linked (GlcNAc...) asparagine glycan is linked to Asn-229.

This sequence belongs to the DNase I family.

It is found in the endoplasmic reticulum. The chain is Deoxyribonuclease-1-like 1 (DNASE1L1) from Cricetulus griseus (Chinese hamster).